Consider the following 201-residue polypeptide: Dephospho-CoA kinase (201 aa).

One can recognise a DPCK domain in the interval 4–201; sequence AFFVTASIAC…VIQEISKGNM (198 aa). Position 12–17 (12–17) interacts with ATP; sequence ACGKST.

It belongs to the CoaE family.

Its subcellular location is the cytoplasm. The enzyme catalyses 3'-dephospho-CoA + ATP = ADP + CoA + H(+). It functions in the pathway cofactor biosynthesis; coenzyme A biosynthesis; CoA from (R)-pantothenate: step 5/5. In terms of biological role, catalyzes the phosphorylation of the 3'-hydroxyl group of dephosphocoenzyme A to form coenzyme A. This Campylobacter jejuni subsp. jejuni serotype O:2 (strain ATCC 700819 / NCTC 11168) protein is Dephospho-CoA kinase.